A 467-amino-acid chain; its full sequence is MTLADAQPQALNFECETGNYHTFCPISCVAWLYQKIEDSFFLVIGTKTCGYFLQNAMGVMIFAEPRYAMAELEEGDISAQLNDYNELKRLCEQIKRDRNPSVIVFIGTCTTEIIKMDLEGLAPKLESEIGIPIVVARANGLDYAFTQGEDTVLAAMAQRCPTQAPTAEADKEERNAIQKLMNFGRKQEDVKREESEYVDHPPLVMFGSVPDPIVTQLSLELKHQGIKVSGWLPAKRYTELPVIEEGYYVSGVNPFLSRTATTLMRRRKAKLIGSPFPIGPDGTRAWVEKICSVFNIEPKGLEEREAKIWQSVEDYLQLIRGKSVFFMGDNLLEISLARFLIRCGMTCHEIGIPYMDKRYQAAELDFLVKTCQEMGVPVPTIVEKPDNYNQLQRIHELKPDLVITGMAHANPLEARGISTKWSVEFTFAQIHGFGNTRDILELVTRPLRRNGALKDLGWEKLVEEARV.

Positions 24, 49, and 109 each coordinate [4Fe-4S] cluster.

It belongs to the BchN/ChlN family. In terms of assembly, protochlorophyllide reductase is composed of three subunits; ChlL, ChlN and ChlB. Forms a heterotetramer of two ChlB and two ChlN subunits. [4Fe-4S] cluster serves as cofactor.

It catalyses the reaction chlorophyllide a + oxidized 2[4Fe-4S]-[ferredoxin] + 2 ADP + 2 phosphate = protochlorophyllide a + reduced 2[4Fe-4S]-[ferredoxin] + 2 ATP + 2 H2O. It participates in porphyrin-containing compound metabolism; chlorophyll biosynthesis (light-independent). In terms of biological role, component of the dark-operative protochlorophyllide reductase (DPOR) that uses Mg-ATP and reduced ferredoxin to reduce ring D of protochlorophyllide (Pchlide) to form chlorophyllide a (Chlide). This reaction is light-independent. The NB-protein (ChlN-ChlB) is the catalytic component of the complex. The chain is Light-independent protochlorophyllide reductase subunit N from Leptolyngbya boryana (Plectonema boryanum).